The following is a 302-amino-acid chain: Sulfate adenylyltransferase subunit 2 (302 aa).

Positions 280–302 (RQGRVIDHDSSGSMEKKKREGYF) are disordered.

The protein belongs to the PAPS reductase family. CysD subfamily. As to quaternary structure, heterodimer composed of CysD, the smaller subunit, and CysN.

It carries out the reaction sulfate + ATP + H(+) = adenosine 5'-phosphosulfate + diphosphate. It functions in the pathway sulfur metabolism; hydrogen sulfide biosynthesis; sulfite from sulfate: step 1/3. With CysN forms the ATP sulfurylase (ATPS) that catalyzes the adenylation of sulfate producing adenosine 5'-phosphosulfate (APS) and diphosphate, the first enzymatic step in sulfur assimilation pathway. APS synthesis involves the formation of a high-energy phosphoric-sulfuric acid anhydride bond driven by GTP hydrolysis by CysN coupled to ATP hydrolysis by CysD. The sequence is that of Sulfate adenylyltransferase subunit 2 from Shewanella amazonensis (strain ATCC BAA-1098 / SB2B).